The primary structure comprises 77 residues: U8-lycotoxin-Ls1j (77 aa).

Residues 1–20 (MKLIIFTGLILFAIVSLIEA) form the signal peptide. A propeptide spanning residues 21-26 (QANNEK) is cleaved from the precursor.

Belongs to the neurotoxin 19 (CSTX) family. 08 (U8-Lctx) subfamily. Contains 4 disulfide bonds. In terms of tissue distribution, expressed by the venom gland.

It is found in the secreted. In Lycosa singoriensis (Wolf spider), this protein is U8-lycotoxin-Ls1j.